The chain runs to 174 residues: NADH-ubiquinone oxidoreductase chain 6 (174 aa).

The next 6 membrane-spanning stretches (helical) occupy residues 1-21 (MTYA…GFSS), 24-44 (SPIY…AVIL), 47-67 (GGGY…MVVF), 86-106 (AEVL…VLWV), 111-131 (GVVV…EGEG), and 151-171 (WLVV…IEIA).

It belongs to the complex I subunit 6 family. In terms of assembly, core subunit of respiratory chain NADH dehydrogenase (Complex I) which is composed of 45 different subunits.

Its subcellular location is the mitochondrion inner membrane. It carries out the reaction a ubiquinone + NADH + 5 H(+)(in) = a ubiquinol + NAD(+) + 4 H(+)(out). Its function is as follows. Core subunit of the mitochondrial membrane respiratory chain NADH dehydrogenase (Complex I) which catalyzes electron transfer from NADH through the respiratory chain, using ubiquinone as an electron acceptor. Essential for the catalytic activity and assembly of complex I. The protein is NADH-ubiquinone oxidoreductase chain 6 (MT-ND6) of Pongo pygmaeus (Bornean orangutan).